A 130-amino-acid chain; its full sequence is Small ribosomal subunit protein uS9 (130 aa).

This sequence belongs to the universal ribosomal protein uS9 family.

The sequence is that of Small ribosomal subunit protein uS9 from Agathobacter rectalis (strain ATCC 33656 / DSM 3377 / JCM 17463 / KCTC 5835 / VPI 0990) (Eubacterium rectale).